Consider the following 312-residue polypeptide: Olfactory receptor 2J2 (312 aa).

Residues 1–26 (MMIKKNASSEDFFILLGFSNWPQLEV) lie on the Extracellular side of the membrane. An N-linked (GlcNAc...) asparagine glycan is attached at N6. A helical membrane pass occupies residues 27–50 (VLFVVILIFYLMTLTGNLFIIILS). At 51–58 (YVDSHLHT) the chain is on the cytoplasmic side. A helical membrane pass occupies residues 59 to 80 (PMYFFLSNLSFLDLCHTTSSIP). The Extracellular segment spans residues 81–101 (QLLVNLRGPEKTISYAGCMVQ). C98 and C190 are disulfide-bonded. The helical transmembrane segment at 102–121 (LYFVLALGIAECVLLVVMSY) threads the bilayer. The Cytoplasmic segment spans residues 122–140 (DRYVAVCRPLHYTVLMHPR). The helical transmembrane segment at 141-159 (FCHLLAAASWVIGFTISAL) threads the bilayer. The Extracellular portion of the chain corresponds to 160-196 (HSSFTFWVPLCGHRLVDHFFCEVPALLRLSCVDTHAN). Residues 197-220 (ELTLMVMSSIFVLIPLILILTAYG) form a helical membrane-spanning segment. Residues 221–237 (AIARAVLSMQSTTGLQK) lie on the Cytoplasmic side of the membrane. A helical membrane pass occupies residues 238 to 260 (VFRTCGAHLMVVSLFFIPVMCMY). Over 261 to 273 (LQPPSENSPDQGK) the chain is Extracellular. The helical transmembrane segment at 274-293 (FIALFYTVVTPSLNPLIYTL) threads the bilayer. The Cytoplasmic segment spans residues 294–312 (RNKHVKGAAKRLLGWEWGK).

It belongs to the G-protein coupled receptor 1 family.

The protein localises to the cell membrane. Odorant receptor. In Homo sapiens (Human), this protein is Olfactory receptor 2J2 (OR2J2).